Here is a 156-residue protein sequence, read N- to C-terminus: ATP synthase subunit b (156 aa).

The chain crosses the membrane as a helical span at residues 7–27 (LIGQLIAFALFVAFCMKFVWP).

Belongs to the ATPase B chain family. In terms of assembly, F-type ATPases have 2 components, F(1) - the catalytic core - and F(0) - the membrane proton channel. F(1) has five subunits: alpha(3), beta(3), gamma(1), delta(1), epsilon(1). F(0) has three main subunits: a(1), b(2) and c(10-14). The alpha and beta chains form an alternating ring which encloses part of the gamma chain. F(1) is attached to F(0) by a central stalk formed by the gamma and epsilon chains, while a peripheral stalk is formed by the delta and b chains.

It localises to the cell inner membrane. In terms of biological role, f(1)F(0) ATP synthase produces ATP from ADP in the presence of a proton or sodium gradient. F-type ATPases consist of two structural domains, F(1) containing the extramembraneous catalytic core and F(0) containing the membrane proton channel, linked together by a central stalk and a peripheral stalk. During catalysis, ATP synthesis in the catalytic domain of F(1) is coupled via a rotary mechanism of the central stalk subunits to proton translocation. Functionally, component of the F(0) channel, it forms part of the peripheral stalk, linking F(1) to F(0). In Actinobacillus pleuropneumoniae serotype 7 (strain AP76), this protein is ATP synthase subunit b.